We begin with the raw amino-acid sequence, 158 residues long: C-type lectin galactose-binding isoform (158 aa).

An N-terminal signal peptide occupies residues Met1–Ser23. 3 cysteine pairs are disulfide-bonded: Cys26–Cys37, Cys54–Cys154, and Cys129–Cys146. The 123-residue stretch at Arg33 to Gln155 folds into the C-type lectin domain. Residues Gln119, Asp121, and Glu127 each coordinate Ca(2+). The Galactose-binding motif lies at Gln119–Asp121. N-linked (GlcNAc...) asparagine glycosylation is present at Asn134. Ca(2+)-binding residues include Asn142 and Asp143.

Belongs to the true venom lectin family. In terms of assembly, homodimer; disulfide-linked. As to expression, expressed by the venom gland.

It is found in the secreted. Functionally, galactose-binding lectin that binds to and agglutinates erythrocytes in a calcium-dependent manner. The sequence is that of C-type lectin galactose-binding isoform from Pseudechis porphyriacus (Red-bellied black snake).